The chain runs to 660 residues: UvrABC system protein B (660 aa).

One can recognise a Helicase ATP-binding domain in the interval lysine 26–proline 414. Glycine 39 to threonine 46 contacts ATP. The Beta-hairpin motif lies at tyrosine 92–isoleucine 115. One can recognise a Helicase C-terminal domain in the interval glutamine 430–isoleucine 596. A UVR domain is found at glutamate 624–glutamate 659.

It belongs to the UvrB family. As to quaternary structure, forms a heterotetramer with UvrA during the search for lesions. Interacts with UvrC in an incision complex.

It is found in the cytoplasm. The UvrABC repair system catalyzes the recognition and processing of DNA lesions. A damage recognition complex composed of 2 UvrA and 2 UvrB subunits scans DNA for abnormalities. Upon binding of the UvrA(2)B(2) complex to a putative damaged site, the DNA wraps around one UvrB monomer. DNA wrap is dependent on ATP binding by UvrB and probably causes local melting of the DNA helix, facilitating insertion of UvrB beta-hairpin between the DNA strands. Then UvrB probes one DNA strand for the presence of a lesion. If a lesion is found the UvrA subunits dissociate and the UvrB-DNA preincision complex is formed. This complex is subsequently bound by UvrC and the second UvrB is released. If no lesion is found, the DNA wraps around the other UvrB subunit that will check the other stand for damage. The chain is UvrABC system protein B from Oceanobacillus iheyensis (strain DSM 14371 / CIP 107618 / JCM 11309 / KCTC 3954 / HTE831).